A 291-amino-acid polypeptide reads, in one-letter code: Pantothenate synthetase (291 aa).

Residue 30–37 (MGNLHEGH) participates in ATP binding. Histidine 37 functions as the Proton donor in the catalytic mechanism. Glutamine 61 contacts (R)-pantoate. Glutamine 61 is a binding site for beta-alanine. ATP is bound at residue 149 to 152 (GEKD). Glutamine 155 is a binding site for (R)-pantoate. ATP is bound by residues valine 178 and 186–189 (MSSR).

It belongs to the pantothenate synthetase family. Homodimer.

The protein resides in the cytoplasm. The catalysed reaction is (R)-pantoate + beta-alanine + ATP = (R)-pantothenate + AMP + diphosphate + H(+). The protein operates within cofactor biosynthesis; (R)-pantothenate biosynthesis; (R)-pantothenate from (R)-pantoate and beta-alanine: step 1/1. Catalyzes the condensation of pantoate with beta-alanine in an ATP-dependent reaction via a pantoyl-adenylate intermediate. The chain is Pantothenate synthetase from Aliivibrio fischeri (strain ATCC 700601 / ES114) (Vibrio fischeri).